The sequence spans 485 residues: MEDQLSFFPGGLRVMPVDGDTKNTRTATKTLSTLHYSLVATHTTASAGLCTLSSDNMTDVQTVLCDVKKVVSSGFDFRRVVETEHHIPVIYLLSTTEPEQMVAGEDTEFLNHLLLKATYIVRKPLDQATMAQLWRVVAWRRCCLEERIPRDSMDDIAAHAGVVGKDGNDNDVIIIEEPQVHFKVVRSRGSRKRQLTINVDSGSSDGADANPRQKLEHKKDAKGPLGQHVASHLQPQEYCTKQQKDLDERRLLSLDSLFLKAILSTLNVSLCNPLILTVPAAFTPQDGMTMNKDKAPMIELPFGLPVDDFLVGQTAYGSAGPSIGAPDDNDDDAAMYAYTSALNNNAAVGSLMVPPIESTFTIIDPIVGTKGEGSVPVVVVSEDQNNAVAAIEATAPNNAELFMMPEQVAVDAPVDVEEGIMFSLESLLGLDEDMIPMEDAGGEATDDSLNIKEGGMEIGWDLDLDYILMNNTNEFAFLDDMAWIE.

Residues 13–138 (RVMPVDGDTK…TMAQLWRVVA (126 aa)) form the Response regulatory domain. Residue aspartate 66 is modified to 4-aspartylphosphate. Over residues 195-204 (LTINVDSGSS) the composition is skewed to polar residues. Residues 195-236 (LTINVDSGSSDGADANPRQKLEHKKDAKGPLGQHVASHLQPQ) are disordered. Over residues 211–222 (PRQKLEHKKDAK) the composition is skewed to basic and acidic residues.

It belongs to the ARR family. Type-B subfamily. In terms of processing, two-component system major event consists of a His-to-Asp phosphorelay between a sensor histidine kinase (HK) and a response regulator (RR). In plants, the His-to-Asp phosphorelay involves an additional intermediate named Histidine-containing phosphotransfer protein (HPt). This multistep phosphorelay consists of a His-Asp-His-Asp sequential transfer of a phosphate group between first a His and an Asp of the HK protein, followed by the transfer to a conserved His of the HPt protein and finally the transfer to an Asp in the receiver domain of the RR protein.

Its function is as follows. Functions as a response regulator involved in His-to-Asp phosphorelay signal transduction system. Phosphorylation of the Asp residue in the receiver domain activates the ability of the protein to promote the transcription of target genes. May directly activate some type-A response regulators in response to cytokinins. This Oryza sativa subsp. japonica (Rice) protein is Two-component response regulator ORR31.